The following is a 243-amino-acid chain: Terpene cyclase dpmpB (243 aa).

7 helical membrane-spanning segments follow: residues 13 to 33, 51 to 71, 78 to 98, 112 to 132, 141 to 161, 169 to 189, and 207 to 227; these read FLEV…GWTA, ALMP…ILPF, WVHV…IKFA, LTWI…ALAA, AWSA…QLLC, SYLL…QDIL, and LWFV…LWYV.

It belongs to the paxB family.

It localises to the membrane. The protein operates within secondary metabolite biosynthesis; terpenoid biosynthesis. In terms of biological role, terpene cyclase; part of the gene cluster that mediates the biosynthesis of diterpenoid pyrones. The first step of the pathway is the synthesis of the alpha-pyrone moiety by the polyketide synthase dpmpA via condensation of one acetyl-CoA starter unit with 3 malonyl-CoA units and 2 methylations. The alpha-pyrone is then combined with geranylgeranyl pyrophosphate (GGPP) formed by the GGPP synthase dpmpD through the action of the prenyltransferase dpmpC to yield a linear alpha-pyrone diterpenoid. Subsequent steps in the diterpenoid pyrone biosynthetic pathway involve the decalin core formation, which is initiated by the epoxidation of the C10-C11 olefin by the FAD-dependent oxidoreductase dpmpE, and is followed by a cyclization cascade catalyzed by the terpene cyclase dpmpB. The short chain dehydrogenase/reductase dpmpG then oxidizes the 8S hydroxy group to a ketone and the short chain dehydrogenase/reductase dpmpH reduces the ketone to the 8R hydroxy group to yield higginsianin B. Higginsianin B is further methylated by the methyltransferase dpmpI to produce the intermediate named FDDP B. The cytochrome P450 monooxygenase dpmpJ then oxidizes the C-26 methyl to primary alcohol, producing the final diterpenoid pyrone with a C-26 primary alcohol on the gamma-pyrone moiety named FDDP C. This is Terpene cyclase dpmpB from Macrophomina phaseolina (strain MS6) (Charcoal rot fungus).